Reading from the N-terminus, the 612-residue chain is uncharacterized protein (612 aa).

Disordered stretches follow at residues 46-113 (QQPQ…MVTP), 129-185 (QQYQ…TPTY), 313-360 (TKDG…GSTM), 457-488 (FSIS…SGYG), and 593-612 (NNTN…VVTI). Residues 58–102 (HQQIPISTQSTPNSTSSTTTTTTTTTSTTTAPTSNSKKSKTTPSN) are compositionally biased toward low complexity. 2 stretches are compositionally biased toward polar residues: residues 103-113 (GNKPTSGMVTP) and 129-138 (QQYQPNSQLQ). Positions 143 to 169 (IIKKSSLSTTPNNINNNNNNNNNTNTI) are enriched in low complexity. A compositionally biased stretch (polar residues) spans 175-185 (GGNNSAPTPTY). The segment covering 323–359 (TTSSTSTSSSATSTTSSSTSSTTTTSSTSNSSTPGST) has biased composition (low complexity).

This is an uncharacterized protein from Dictyostelium discoideum (Social amoeba).